A 157-amino-acid polypeptide reads, in one-letter code: Endoribonuclease YbeY (157 aa).

Zn(2+)-binding residues include His-113, His-117, and His-123.

Belongs to the endoribonuclease YbeY family. Zn(2+) is required as a cofactor.

It localises to the cytoplasm. Single strand-specific metallo-endoribonuclease involved in late-stage 70S ribosome quality control and in maturation of the 3' terminus of the 16S rRNA. This is Endoribonuclease YbeY from Ehrlichia ruminantium (strain Welgevonden).